The following is a 202-amino-acid chain: MPSGSLWRVLGLCLLSVGAWGQEDNEDPLEPSPQTSASARYKVSISGTTVVLTCPEDLGSESIKWERNGDLLPNEYGEQLFLDDFSEMENSGYYACYTSNSLEKNYLYLKARVCQNCVEVDTMTAVAIVVADVCITLGFLLLVYYWSKNKKASSVTMMRGPGAGGRPRGQNKEKPPPVPNPDYEPIRKGQQDLYSGLNQRGI.

Residues 1–21 (MPSGSLWRVLGLCLLSVGAWG) form the signal peptide. Over 22 to 125 (QEDNEDPLEP…NCVEVDTMTA (104 aa)) the chain is Extracellular. One can recognise an Ig-like domain in the interval 33 to 107 (PQTSASARYK…TSNSLEKNYL (75 aa)). The cysteines at positions 54 and 96 are disulfide-linked. The chain crosses the membrane as a helical span at residues 126 to 146 (VAIVVADVCITLGFLLLVYYW). Over 147-202 (SKNKKASSVTMMRGPGAGGRPRGQNKEKPPPVPNPDYEPIRKGQQDLYSGLNQRGI) the chain is Cytoplasmic. Positions 156-202 (TMMRGPGAGGRPRGQNKEKPPPVPNPDYEPIRKGQQDLYSGLNQRGI) are disordered. The segment at 170-187 (QNKEKPPPVPNPDYEPIR) is NUMB-binding region. Residues 173–200 (EKPPPVPNPDYEPIRKGQQDLYSGLNQR) enclose the ITAM domain. The interval 174 to 181 (KPPPVPNP) is proline-rich sequence. Tyr-183 and Tyr-194 each carry phosphotyrosine. Positions 192–202 (DLYSGLNQRGI) are enriched in polar residues.

As to quaternary structure, the TCR-CD3 complex is composed of a CD3D/CD3E and a CD3G/CD3E heterodimers that preferentially associate with TCRalpha and TCRbeta, respectively, to form TCRalpha/CD3E/CD3G and TCRbeta/CD3G/CD3E trimers. In turn, the hexamer interacts with CD3Z homodimer to form the TCR-CD3 complex. Alternatively, TCRalpha and TCRbeta can be replaced by TCRgamma and TCRdelta. Interacts with CD6. Interacts (via Proline-rich sequence) with NCK1; the interaction is ligand dependent but independent of tyrosine kinase activation. In terms of processing, phosphorylated on Tyr residues after T-cell receptor triggering by LCK in association with CD4/CD8.

The protein localises to the cell membrane. In terms of biological role, part of the TCR-CD3 complex present on T-lymphocyte cell surface that plays an essential role in adaptive immune response. When antigen presenting cells (APCs) activate T-cell receptor (TCR), TCR-mediated signals are transmitted across the cell membrane by the CD3 chains CD3D, CD3E, CD3G and CD3Z. All CD3 chains contain immunoreceptor tyrosine-based activation motifs (ITAMs) in their cytoplasmic domain. Upon TCR engagement, these motifs become phosphorylated by Src family protein tyrosine kinases LCK and FYN, resulting in the activation of downstream signaling pathways. In addition of this role of signal transduction in T-cell activation, CD3E plays an essential role in correct T-cell development. Also participates in internalization and cell surface down-regulation of TCR-CD3 complexes via endocytosis sequences present in CD3E cytosolic region. In addition to its role as a TCR coreceptor, it serves as a receptor for ITPRIPL1. Ligand recognition inhibits T-cell activation by promoting interaction with NCK1, which prevents CD3E-ZAP70 interaction and blocks the ERK-NFkB signaling cascade and calcium influx. The sequence is that of T-cell surface glycoprotein CD3 epsilon chain (CD3E) from Felis catus (Cat).